We begin with the raw amino-acid sequence, 480 residues long: MDSPEVYEVVDASPEKPMEIAIVGGGIVGVILAIGLTRQNIKVRVFEQAASFREIGAGMAFNACARNCMDLIDPVITQALLRCGAVNMSDVDAEDDYLRWIDGYNQHRPEDPSYQRPLSEIGGAGFRGCRRDQFLEELAKEVPQGAVEFRKRLASLEDNTDNGPVVLNFTDGTRAEVDAVIGCDGIKSVVRKQMFGTNHPASNAQYTHKVAYRGLVPMNRAVEVLGPWKAGNFHHHVGPGAHLTHYPVANNTVLNVVAFLSDPNPWPDNQRMEMEGSREDVLTGLKGWHPTVLNLVNLLPEKLSKWALFDLCEFPAPSYSAGRVCIAGDAAHASSPHHGASACLGVEDCLCLNVLLAQVRETVAANQDPAKNRLALSRAIETAFKTFDTVRHKRTQWLVNSSRRVCDLYHQPEWADPTRWAKAETCFEEIRDRSYKIWYFDVDGMVKQTRDEYELRQHGEKLGNGTNGVFSDERHGGYTL.

Residues 17 to 37 traverse the membrane as a helical segment; the sequence is PMEIAIVGGGIVGVILAIGLT. FAD contacts are provided by E47 and A60. N87 is a glycosylation site (N-linked (GlcNAc...) asparagine). R131 serves as a coordination point for FAD. N168 carries N-linked (GlcNAc...) asparagine glycosylation. Residues R213 and Y246 contribute to the active site. Residue N250 is glycosylated (N-linked (GlcNAc...) asparagine). FAD-binding residues include D329 and A342. N-linked (GlcNAc...) asparagine glycans are attached at residues N400 and N464.

This sequence belongs to the paxM FAD-dependent monooxygenase family. FAD serves as cofactor.

Its subcellular location is the membrane. The protein operates within secondary metabolite biosynthesis; terpenoid biosynthesis. Functionally, salicylate hydroxylase; part of the gene cluster that mediates the biosynthesis of xenovulene A, an unusual meroterpenoid that has potent inhibitory effects on the human gamma-aminobutyrate A (GABAA) benzodiazepine receptor. The first step of xenovulene A biosynthesis is the biosynthesis of 3-methylorcinaldehyde performed by the non-reducing polyketide synthase aspks1. The salicylate hydroxylase asL1 then catalyzes the oxidative dearomatization of 3-methylorcinaldehyde to yield a dearomatized hydroxycyclohexadione. The 2-oxoglutarate-dependent dioxygenase asL3 further catalyzes the oxidative ring expansion to provide the first tropolone metabolite. The cytochrome P450 monooxygenase asR2 allows the synthesis of tropolone hemiacetal. In parallel, a previously unrecognised class of terpene cyclase, asR6, produces alpha-humulene from farnesylpyrophosphate (FPP). The putative Diels-Alderase asR5 probably catalyzes the formation of the tropolone-humulene skeleton by linking humulene and the polyketide moiety. Oxidative-ring contractions catalyzed by asL4 and asL6 then processively remove carbon atoms from the polyketide to yield xenovulene A. The sequence is that of Salicylate hydroxylase asL1 from Sarocladium schorii (Acremonium strictum (strain IMI 501407)).